Reading from the N-terminus, the 189-residue chain is Holliday junction branch migration complex subunit RuvA (189 aa).

The domain I stretch occupies residues 1–63; it reads MIYAMYGVLE…DDEISLYGFS (63 aa). A domain II region spans residues 64 to 135; that stretch reads DVLKLKLFEK…ELKDSMKEFD (72 aa). The segment at 135–139 is flexible linker; sequence DVTLT. The interval 140 to 189 is domain III; sequence EKDKKILEAIEALVTLGFSRNQSKKAVTQILKKDDSLDDIIKKALKFLSR.

The protein belongs to the RuvA family. As to quaternary structure, homotetramer. Forms an RuvA(8)-RuvB(12)-Holliday junction (HJ) complex. HJ DNA is sandwiched between 2 RuvA tetramers; dsDNA enters through RuvA and exits via RuvB. An RuvB hexamer assembles on each DNA strand where it exits the tetramer. Each RuvB hexamer is contacted by two RuvA subunits (via domain III) on 2 adjacent RuvB subunits; this complex drives branch migration. In the full resolvosome a probable DNA-RuvA(4)-RuvB(12)-RuvC(2) complex forms which resolves the HJ.

Its subcellular location is the cytoplasm. The RuvA-RuvB-RuvC complex processes Holliday junction (HJ) DNA during genetic recombination and DNA repair, while the RuvA-RuvB complex plays an important role in the rescue of blocked DNA replication forks via replication fork reversal (RFR). RuvA specifically binds to HJ cruciform DNA, conferring on it an open structure. The RuvB hexamer acts as an ATP-dependent pump, pulling dsDNA into and through the RuvAB complex. HJ branch migration allows RuvC to scan DNA until it finds its consensus sequence, where it cleaves and resolves the cruciform DNA. The chain is Holliday junction branch migration complex subunit RuvA from Thermosipho melanesiensis (strain DSM 12029 / CIP 104789 / BI429).